A 577-amino-acid chain; its full sequence is MNIQALLSEKVSQALIAAGAPADCEPQVRQSAKVQFGDYQANGVMAVAKKLGMAPRQLAEQVLSHLDLNGIANKVEIAGPGFINIFLDPAFLADNVNRALQSERLGVTKPQAQTIVVDYSAPNVAKEMHVGHLRSTIIGDASVRTLEFLGHKVIRANHVGDWGTQFGMLIAYLEKQQQENAGEMALADLEGFYREAKKHYDEDEAFAERARSYVVKLQGGDEYFLQMWRKLVDITMSQNQITYDRLNVTLTRDDVMGESLYNPMLPGIVADLKAKGLAVESEGATVVFLDEYKNKEGEPMGVIIQKKDGGYLYTTTDIACAKYRYETLHADRVLYYIDSRQHQHLMQAWTIVRKAGYVPDSVPLEHHMFGMMLGKDGKPFKTRAGGTVKLADLLDEALERARRLVAEKNPDMSADELENLAKVVGIGAVKYADLSKNRTTDYVFDWDNMLAFEGNTAPYMQYAYTRVLSVFRKAGIDENAMIDAPVVIAEDREAQLAARLLQFEETLSVVAREGTPHVMCAYLYDLAGLFSGFYEHCPILSAESEETRNSRLKLALLTAKTLKLGLDTLGIETVERM.

The 'HIGH' region motif lies at 122–132 (PNVAKEMHVGH).

Belongs to the class-I aminoacyl-tRNA synthetase family. In terms of assembly, monomer.

The protein localises to the cytoplasm. It carries out the reaction tRNA(Arg) + L-arginine + ATP = L-arginyl-tRNA(Arg) + AMP + diphosphate. The chain is Arginine--tRNA ligase from Klebsiella pneumoniae subsp. pneumoniae (strain ATCC 700721 / MGH 78578).